The primary structure comprises 617 residues: Dihydroxy-acid dehydratase (617 aa).

Position 81 (D81) interacts with Mg(2+). C122 is a binding site for [2Fe-2S] cluster. The Mg(2+) site is built by D123 and K124. K124 is modified (N6-carboxylysine). Residue C195 coordinates [2Fe-2S] cluster. E491 lines the Mg(2+) pocket. Catalysis depends on S517, which acts as the Proton acceptor.

This sequence belongs to the IlvD/Edd family. Homodimer. [2Fe-2S] cluster serves as cofactor. It depends on Mg(2+) as a cofactor.

The enzyme catalyses (2R)-2,3-dihydroxy-3-methylbutanoate = 3-methyl-2-oxobutanoate + H2O. It carries out the reaction (2R,3R)-2,3-dihydroxy-3-methylpentanoate = (S)-3-methyl-2-oxopentanoate + H2O. The protein operates within amino-acid biosynthesis; L-isoleucine biosynthesis; L-isoleucine from 2-oxobutanoate: step 3/4. Its pathway is amino-acid biosynthesis; L-valine biosynthesis; L-valine from pyruvate: step 3/4. In terms of biological role, functions in the biosynthesis of branched-chain amino acids. Catalyzes the dehydration of (2R,3R)-2,3-dihydroxy-3-methylpentanoate (2,3-dihydroxy-3-methylvalerate) into 2-oxo-3-methylpentanoate (2-oxo-3-methylvalerate) and of (2R)-2,3-dihydroxy-3-methylbutanoate (2,3-dihydroxyisovalerate) into 2-oxo-3-methylbutanoate (2-oxoisovalerate), the penultimate precursor to L-isoleucine and L-valine, respectively. In Rhodospirillum rubrum (strain ATCC 11170 / ATH 1.1.1 / DSM 467 / LMG 4362 / NCIMB 8255 / S1), this protein is Dihydroxy-acid dehydratase.